The primary structure comprises 433 residues: 4-hydroxy-3-methylbut-2-en-1-yl diphosphate synthase (flavodoxin) (433 aa).

Residues Cys-320, Cys-323, Cys-366, and Glu-373 each contribute to the [4Fe-4S] cluster site.

The protein belongs to the IspG family. The cofactor is [4Fe-4S] cluster.

The enzyme catalyses (2E)-4-hydroxy-3-methylbut-2-enyl diphosphate + oxidized [flavodoxin] + H2O + 2 H(+) = 2-C-methyl-D-erythritol 2,4-cyclic diphosphate + reduced [flavodoxin]. It participates in isoprenoid biosynthesis; isopentenyl diphosphate biosynthesis via DXP pathway; isopentenyl diphosphate from 1-deoxy-D-xylulose 5-phosphate: step 5/6. In terms of biological role, converts 2C-methyl-D-erythritol 2,4-cyclodiphosphate (ME-2,4cPP) into 1-hydroxy-2-methyl-2-(E)-butenyl 4-diphosphate. In Beijerinckia indica subsp. indica (strain ATCC 9039 / DSM 1715 / NCIMB 8712), this protein is 4-hydroxy-3-methylbut-2-en-1-yl diphosphate synthase (flavodoxin).